The primary structure comprises 281 residues: NADPH-dependent 7-cyano-7-deazaguanine reductase (281 aa).

81–83 serves as a coordination point for substrate; the sequence is VES. 83 to 84 contacts NADPH; that stretch reads SK. The active-site Thioimide intermediate is the Cys188. Asp195 serves as the catalytic Proton donor. A substrate-binding site is contributed by 227–228; sequence HE. 256–257 contacts NADPH; the sequence is RG. A disordered region spans residues 261-281; sequence INPLRTSHPQGLPRNMRTARQ.

Belongs to the GTP cyclohydrolase I family. QueF type 2 subfamily. As to quaternary structure, homodimer.

It is found in the cytoplasm. It catalyses the reaction 7-aminomethyl-7-carbaguanine + 2 NADP(+) = 7-cyano-7-deazaguanine + 2 NADPH + 3 H(+). Its pathway is tRNA modification; tRNA-queuosine biosynthesis. Functionally, catalyzes the NADPH-dependent reduction of 7-cyano-7-deazaguanine (preQ0) to 7-aminomethyl-7-deazaguanine (preQ1). The chain is NADPH-dependent 7-cyano-7-deazaguanine reductase from Verminephrobacter eiseniae (strain EF01-2).